The chain runs to 435 residues: Probable E3 ubiquitin-protein ligase makorin-1 (435 aa).

2 C3H1-type zinc fingers span residues 18 to 45 (WTKH…HDLT) and 48 to 75 (KPAA…HCKP). The disordered stretch occupies residues 81–109 (LPAPQMLPLPSASLAGPSDPEPSGPTPVP). Positions 99-108 (DPEPSGPTPV) are enriched in pro residues. Residues 155-182 (QLRKQLCPYAAVGECRYGINCAYLHGDV) form a C3H1-type 3 zinc finger. A makorin-type Cys-His region spans residues 183–210 (CYMCGLQVLHPTDNNQRSEHTKACIEAH). The RING-type zinc-finger motif lies at 228-282 (CGVCMEVVFEKANPSERRFGILSNCSHCYCLKCIRKWRSAKQFESKIIKSCPECR). Residues 311–340 (GMGSKPCRYFDEGRGTCPFGSNCFYKHAFP) form a C3H1-type 4 zinc finger. The interval 345–369 (EEAQPQRRQTGSNSRNRNSRRTPLW) is disordered.

As to expression, weakly expressed in adult brain, heart and kidney.

The catalysed reaction is S-ubiquitinyl-[E2 ubiquitin-conjugating enzyme]-L-cysteine + [acceptor protein]-L-lysine = [E2 ubiquitin-conjugating enzyme]-L-cysteine + N(6)-ubiquitinyl-[acceptor protein]-L-lysine.. Its pathway is protein modification; protein ubiquitination. Its function is as follows. E3 ubiquitin ligase catalyzing the covalent attachment of ubiquitin moieties onto substrate proteins. In Seriola quinqueradiata (Five-ray yellowtail), this protein is Probable E3 ubiquitin-protein ligase makorin-1.